Reading from the N-terminus, the 314-residue chain is Chitinase 1 (314 aa).

Positions 1 to 26 are cleaved as a signal peptide; that stretch reads MASVSPSSLLLLFFALLSPLLPLTSA. The GH18 domain maps to 27 to 296; it reads LVFREYIGSQ…NVFRYEMQAQ (270 aa). Residue Glu151 is the Proton donor of the active site.

This sequence belongs to the glycosyl hydrolase 18 family. Chitinase class II subfamily.

The catalysed reaction is Random endo-hydrolysis of N-acetyl-beta-D-glucosaminide (1-&gt;4)-beta-linkages in chitin and chitodextrins.. In terms of biological role, able to cleave glycolchitin. The sequence is that of Chitinase 1 from Tulipa saxatilis subsp. bakeri (Tulip).